Reading from the N-terminus, the 392-residue chain is S-adenosylmethionine synthase (392 aa).

An ATP-binding site is contributed by histidine 20. Aspartate 22 lines the Mg(2+) pocket. Glutamate 48 is a binding site for K(+). Residues glutamate 61 and glutamine 106 each contribute to the L-methionine site. The segment at 106–116 (QSQDIINAIKK) is flexible loop. ATP is bound by residues 171–173 (DSK), aspartate 248, 254–255 (RK), alanine 271, and lysine 275. Aspartate 248 serves as a coordination point for L-methionine. Lysine 279 is an L-methionine binding site.

The protein belongs to the AdoMet synthase family. In terms of assembly, homotetramer; dimer of dimers. Mg(2+) serves as cofactor. It depends on K(+) as a cofactor.

Its subcellular location is the cytoplasm. The catalysed reaction is L-methionine + ATP + H2O = S-adenosyl-L-methionine + phosphate + diphosphate. It functions in the pathway amino-acid biosynthesis; S-adenosyl-L-methionine biosynthesis; S-adenosyl-L-methionine from L-methionine: step 1/1. Catalyzes the formation of S-adenosylmethionine (AdoMet) from methionine and ATP. The overall synthetic reaction is composed of two sequential steps, AdoMet formation and the subsequent tripolyphosphate hydrolysis which occurs prior to release of AdoMet from the enzyme. The sequence is that of S-adenosylmethionine synthase from Borrelia garinii subsp. bavariensis (strain ATCC BAA-2496 / DSM 23469 / PBi) (Borreliella bavariensis).